The sequence spans 103 residues: Integration host factor subunit alpha (103 aa).

This sequence belongs to the bacterial histone-like protein family. Heterodimer of an alpha and a beta chain.

This protein is one of the two subunits of integration host factor, a specific DNA-binding protein that functions in genetic recombination as well as in transcriptional and translational control. The protein is Integration host factor subunit alpha of Bartonella bacilliformis (strain ATCC 35685 / KC583 / Herrer 020/F12,63).